A 1200-amino-acid polypeptide reads, in one-letter code: DNA polymerase subunit gamma-1 (1200 aa).

Disordered stretches follow at residues 471–515 (QKKT…RPSM) and 667–688 (MDLS…SSEH). Over residues 472–481 (KKTKISKKQK) the composition is skewed to basic residues. The span at 494-512 (LVEDHNEDPGPPTEKEESR) shows a compositional bias: basic and acidic residues.

The protein belongs to the DNA polymerase type-A family. Heterotrimer composed of a catalytic subunit and a homodimer of accessory subunits. Requires Mg(2+) as cofactor.

The protein localises to the mitochondrion. It localises to the mitochondrion matrix. Its subcellular location is the mitochondrion nucleoid. The catalysed reaction is DNA(n) + a 2'-deoxyribonucleoside 5'-triphosphate = DNA(n+1) + diphosphate. Involved in the replication of mitochondrial DNA. Associates with mitochondrial DNA. This Xenopus laevis (African clawed frog) protein is DNA polymerase subunit gamma-1 (polg).